A 438-amino-acid polypeptide reads, in one-letter code: Probable inactive protein kinase 38 (438 aa).

In terms of domain architecture, Protein kinase spans 77–340 (PRFRLALGKG…FTELQPQYFL (264 aa)).

This sequence belongs to the protein kinase superfamily. Tyr protein kinase family.

The chain is Probable inactive protein kinase 38 (36) from Equus caballus (Horse).